The following is a 147-amino-acid chain: UPF0306 protein YhbP (147 aa).

Belongs to the UPF0306 family.

This is UPF0306 protein YhbP from Escherichia fergusonii (strain ATCC 35469 / DSM 13698 / CCUG 18766 / IAM 14443 / JCM 21226 / LMG 7866 / NBRC 102419 / NCTC 12128 / CDC 0568-73).